The following is a 508-amino-acid chain: MLFLAFHAGSWGSWCCCCCVITADRPWDRGRRWQLEMADTPSVYETRFEAAVKVIQSLPKNGSFQPTNEMMLKFYSFYKQATEGPCKLSRPGFWDPIGRYKWDAWSSLGDMTKEEAMIAYVEEMKKIIETMPMTEKVEELLHVIGPFYEIVEDKKSSKSSDLTSDLGNVLTSSNAKAVNGKAESSDSGAESEEEEAQEELKGAEQSGSDDKKTLKKSADKNLEIIVTNGYKGSFVQDIQSDIHTDSSRSTRSSEDEKPGDESSQQTGHTIVCAHQDRNEDPSEDASGIHHLTSDSDSEVYCDSMEQFGQEEYYLGGDPTQHLESSGFCEDAQQSPGNGSIGKMWMVAVKGKGEVKHGGEDGRSSSGAPHRETRGGESEDFSSVRRGRGNRIPHLSEGPKGRQVGSGGDGERWGSDRGSRGSLNEQIALVLIRLQEDMQNVLQRLHKLETLTASQAKLSLQTSNQPSSQRPAWWPFEMSPGALAFAIIWPFIAQWLAHLYYQRRRRKLN.

The ACB domain occupies 44–133 (YETRFEAAVK…MKKIIETMPM (90 aa)). An acyl-CoA contacts are provided by residues 55 to 64 (IQSLPKNGSF), 75 to 79 (YSFYK), lysine 101, and tyrosine 120. A disordered region spans residues 175–215 (AKAVNGKAESSDSGAESEEEEAQEELKGAEQSGSDDKKTLK). The stretch at 181-214 (KAESSDSGAESEEEEAQEELKGAEQSGSDDKKTL) forms a coiled coil. Residues serine 184, serine 185, serine 187, serine 191, serine 206, and serine 233 each carry the phosphoserine modification. Positions 198–215 (EELKGAEQSGSDDKKTLK) are enriched in basic and acidic residues. Basic and acidic residues predominate over residues 240–260 (SDIHTDSSRSTRSSEDEKPGD). Positions 240–300 (SDIHTDSSRS…LTSDSDSEVY (61 aa)) are disordered. Position 303 is a phosphoserine (serine 303). Disordered regions lie at residues 318–340 (PTQH…NGSI) and 353–419 (EVKH…RGSR). The span at 353–376 (EVKHGGEDGRSSSGAPHRETRGGE) shows a compositional bias: basic and acidic residues. Serine 405 is modified (phosphoserine). A compositionally biased stretch (basic and acidic residues) spans 408–418 (DGERWGSDRGS). A coiled-coil region spans residues 428 to 453 (LVLIRLQEDMQNVLQRLHKLETLTAS). Lysine 446 bears the N6-acetyllysine mark. Residues 480–500 (GALAFAIIWPFIAQWLAHLYY) form a helical membrane-spanning segment.

The protein belongs to the ATG37 family.

It localises to the peroxisome membrane. Acyl-CoA binding protein which acts as the peroxisome receptor for pexophagy but is dispensable for aggrephagy and nonselective autophagy. Binds medium- and long-chain acyl-CoA esters. The sequence is that of Acyl-CoA-binding domain-containing protein 5 (Acbd5) from Mus musculus (Mouse).